We begin with the raw amino-acid sequence, 452 residues long: Protoheme IX farnesyltransferase, mitochondrial (452 aa).

The N-terminal 27 residues, 1–27 (MSLVIQPLLMRALNPNLSSILISGRGF), are a transit peptide targeting the mitochondrion. Transmembrane regions (helical) follow at residues 152–172 (VLVM…ATVL), 235–255 (ILWL…IALY), 267–287 (IINT…GWAA), 291–311 (LSHP…FPHF), 341–361 (VALR…YFNV), 364–386 (WYYQ…KFYF), and 417–437 (TFWV…LHKK).

The protein belongs to the UbiA prenyltransferase family.

The protein resides in the mitochondrion membrane. Converts protoheme IX and farnesyl diphosphate to heme O. The sequence is that of Protoheme IX farnesyltransferase, mitochondrial (COX10) from Kluyveromyces lactis (strain ATCC 8585 / CBS 2359 / DSM 70799 / NBRC 1267 / NRRL Y-1140 / WM37) (Yeast).